Here is a 519-residue protein sequence, read N- to C-terminus: Protein tweety homolog 1 (519 aa).

Over 1-42 (MTFASFLINFYSVIPRLNFKFHWTNDVFNLEWSSEYFQALAL) the chain is Extracellular. A helical membrane pass occupies residues 43 to 63 (VACLGAAVSLLLLVTIIIVWI). The Cytoplasmic portion of the chain corresponds to 64 to 82 (CQACHKNETTGKTRRRVRR). Residues 83 to 103 (LSTVLFIISVLCFFMLGVCLF) traverse the membrane as a helical segment. Residues 104-217 (ANEHVNRGMS…VLSLYESERW (114 aa)) are Extracellular-facing. N-linked (GlcNAc...) asparagine glycans are attached at residues Asn-142, Asn-163, and Asn-176. Residues 218-238 (AFLVILLSITMVVLFTGVVAF) traverse the membrane as a helical segment. The Cytoplasmic segment spans residues 239–245 (CKQSKKG). A helical membrane pass occupies residues 246-266 (AVVFSAIGFFIFVVVWLLISI). Topologically, residues 267-395 (SLPLTIALAD…GTCNQSVAGM (129 aa)) are extracellular. N-linked (GlcNAc...) asparagine glycosylation is found at Asn-328, Asn-341, Asn-348, and Asn-389. Residues 396-416 (SIYMLSILLLGVFLFILLIVV) form a helical membrane-spanning segment. Residues 417–519 (SKTWNLFSRL…YNNYEDRYNM (103 aa)) lie on the Cytoplasmic side of the membrane. The tract at residues 459 to 485 (YNPRTRDRTEPSTNTTSGTADEPNAPL) is disordered.

This sequence belongs to the tweety family.

The protein resides in the cell membrane. Its function is as follows. Probable chloride channel. The sequence is that of Protein tweety homolog 1 (ttyh-1) from Caenorhabditis elegans.